The chain runs to 443 residues: ATP-dependent protease ATPase subunit HslU (443 aa).

Residues I18, 60–65 (GVGKTE), D256, E321, and R393 each bind ATP.

The protein belongs to the ClpX chaperone family. HslU subfamily. As to quaternary structure, a double ring-shaped homohexamer of HslV is capped on each side by a ring-shaped HslU homohexamer. The assembly of the HslU/HslV complex is dependent on binding of ATP.

It localises to the cytoplasm. Its function is as follows. ATPase subunit of a proteasome-like degradation complex; this subunit has chaperone activity. The binding of ATP and its subsequent hydrolysis by HslU are essential for unfolding of protein substrates subsequently hydrolyzed by HslV. HslU recognizes the N-terminal part of its protein substrates and unfolds these before they are guided to HslV for hydrolysis. The protein is ATP-dependent protease ATPase subunit HslU of Escherichia coli O17:K52:H18 (strain UMN026 / ExPEC).